A 132-amino-acid polypeptide reads, in one-letter code: uncharacterized protein (132 aa).

The protein to M.jannaschii MJ0661.

This is an uncharacterized protein from Helicobacter pylori (strain J99 / ATCC 700824) (Campylobacter pylori J99).